The following is a 183-amino-acid chain: Peptidyl-tRNA hydrolase (183 aa).

Tyr-15 contributes to the tRNA binding site. The active-site Proton acceptor is His-20. TRNA is bound by residues Tyr-67 and Asn-69.

The protein belongs to the PTH family. Monomer.

The protein localises to the cytoplasm. It carries out the reaction an N-acyl-L-alpha-aminoacyl-tRNA + H2O = an N-acyl-L-amino acid + a tRNA + H(+). In terms of biological role, hydrolyzes ribosome-free peptidyl-tRNAs (with 1 or more amino acids incorporated), which drop off the ribosome during protein synthesis, or as a result of ribosome stalling. Functionally, catalyzes the release of premature peptidyl moieties from peptidyl-tRNA molecules trapped in stalled 50S ribosomal subunits, and thus maintains levels of free tRNAs and 50S ribosomes. In Chlamydia caviae (strain ATCC VR-813 / DSM 19441 / 03DC25 / GPIC) (Chlamydophila caviae), this protein is Peptidyl-tRNA hydrolase.